Reading from the N-terminus, the 238-residue chain is 7-cyano-7-deazaguanine synthase (238 aa).

Residue 14 to 24 coordinates ATP; the sequence is FSGGQDSATCL. The Zn(2+) site is built by Cys202, Cys217, Cys220, and Cys223.

It belongs to the QueC family. Requires Zn(2+) as cofactor.

It catalyses the reaction 7-carboxy-7-deazaguanine + NH4(+) + ATP = 7-cyano-7-deazaguanine + ADP + phosphate + H2O + H(+). It functions in the pathway purine metabolism; 7-cyano-7-deazaguanine biosynthesis. Catalyzes the ATP-dependent conversion of 7-carboxy-7-deazaguanine (CDG) to 7-cyano-7-deazaguanine (preQ(0)). The polypeptide is 7-cyano-7-deazaguanine synthase (Nitrobacter winogradskyi (strain ATCC 25391 / DSM 10237 / CIP 104748 / NCIMB 11846 / Nb-255)).